We begin with the raw amino-acid sequence, 483 residues long: Protein nucleotidyltransferase YdiU (483 aa).

ATP contacts are provided by G87, G89, R90, K110, D122, G123, R173, and R180. Residue D249 is the Proton acceptor of the active site. N250 and D259 together coordinate Mg(2+). D259 serves as a coordination point for ATP.

The protein belongs to the SELO family. It depends on Mg(2+) as a cofactor. Mn(2+) is required as a cofactor.

The catalysed reaction is L-seryl-[protein] + ATP = 3-O-(5'-adenylyl)-L-seryl-[protein] + diphosphate. It catalyses the reaction L-threonyl-[protein] + ATP = 3-O-(5'-adenylyl)-L-threonyl-[protein] + diphosphate. It carries out the reaction L-tyrosyl-[protein] + ATP = O-(5'-adenylyl)-L-tyrosyl-[protein] + diphosphate. The enzyme catalyses L-histidyl-[protein] + UTP = N(tele)-(5'-uridylyl)-L-histidyl-[protein] + diphosphate. The catalysed reaction is L-seryl-[protein] + UTP = O-(5'-uridylyl)-L-seryl-[protein] + diphosphate. It catalyses the reaction L-tyrosyl-[protein] + UTP = O-(5'-uridylyl)-L-tyrosyl-[protein] + diphosphate. In terms of biological role, nucleotidyltransferase involved in the post-translational modification of proteins. It can catalyze the addition of adenosine monophosphate (AMP) or uridine monophosphate (UMP) to a protein, resulting in modifications known as AMPylation and UMPylation. The chain is Protein nucleotidyltransferase YdiU from Pectobacterium atrosepticum (strain SCRI 1043 / ATCC BAA-672) (Erwinia carotovora subsp. atroseptica).